Here is an 853-residue protein sequence, read N- to C-terminus: DNA mismatch repair protein MutS (853 aa).

An ATP-binding site is contributed by 614-621 (GPNMGGKS).

The protein belongs to the DNA mismatch repair MutS family.

Its function is as follows. This protein is involved in the repair of mismatches in DNA. It is possible that it carries out the mismatch recognition step. This protein has a weak ATPase activity. This is DNA mismatch repair protein MutS from Escherichia coli (strain K12 / MC4100 / BW2952).